Here is a 321-residue protein sequence, read N- to C-terminus: Annexin A5 (321 aa).

An N-acetylalanine modification is found at Ala-2. Annexin repeat units follow at residues Phe-15–Lys-86, Pro-87–Gln-158, Ala-170–Lys-242, and Ser-246–Gly-317. Residue Lys-29 forms a Glycyl lysine isopeptide (Lys-Gly) (interchain with G-Cter in SUMO1); alternate linkage. Residue Lys-29 forms a Glycyl lysine isopeptide (Lys-Gly) (interchain with G-Cter in SUMO2); alternate linkage. N6-acetyllysine occurs at positions 70, 76, 79, 97, and 101. At Lys-290 the chain carries N6-succinyllysine. Residues Leu-314–Asp-320 carry the [IL]-x-C-x-x-[DE] motif motif.

The protein belongs to the annexin family. In terms of assembly, monomer. Binds ATRX and EIF5B. In terms of processing, S-nitrosylation is induced by interferon-gamma and oxidatively-modified low-densitity lipoprotein (LDL(ox)) possibly implicating the iNOS-S100A8/9 transnitrosylase complex.

This protein is an anticoagulant protein that acts as an indirect inhibitor of the thromboplastin-specific complex, which is involved in the blood coagulation cascade. The polypeptide is Annexin A5 (ANXA5) (Bos taurus (Bovine)).